Here is a 448-residue protein sequence, read N- to C-terminus: Trigger factor (448 aa).

The PPIase FKBP-type domain occupies 172-257 (GDRVTVDFVG…MKKIEWPHLP (86 aa)).

Belongs to the FKBP-type PPIase family. Tig subfamily.

The protein localises to the cytoplasm. It catalyses the reaction [protein]-peptidylproline (omega=180) = [protein]-peptidylproline (omega=0). Its function is as follows. Involved in protein export. Acts as a chaperone by maintaining the newly synthesized protein in an open conformation. Functions as a peptidyl-prolyl cis-trans isomerase. This is Trigger factor from Paraburkholderia phymatum (strain DSM 17167 / CIP 108236 / LMG 21445 / STM815) (Burkholderia phymatum).